The following is a 95-amino-acid chain: Cytosolic calcium-binding protein 3 (95 aa).

6 tandem repeats follow at residues 30–35 (VEDAEK), 39–43 (DEEEK), 54–59 (VEEEKK), 67–71 (PEEKK), 75–79 (LEEKQ), and 90–94 (VEKAK). Residues 30–94 (VEDAEKTNED…AEEVAVEKAK (65 aa)) form a 6 X 5 AA approximate repeats of V-E-E-K-K region. Residues 54-95 (VEEEKKAEEVTETPEEKKTEALEEKQTEVAAAEEVAVEKAKE) form a disordered region. Over residues 55-80 (EEEKKAEEVTETPEEKKTEALEEKQT) the composition is skewed to basic and acidic residues.

In terms of tissue distribution, low levels in roots (e.g. in cambium) and barely expressed in stems, shoots, flowers, siliques and leaves.

Its subcellular location is the cytoplasm. It is found in the cytosol. Its function is as follows. Binds calcium Ca(2+) and may act as a signal mediator to buffer Ca(2+). The polypeptide is Cytosolic calcium-binding protein 3 (Arabidopsis thaliana (Mouse-ear cress)).